Here is a 464-residue protein sequence, read N- to C-terminus: Cytoplasmic tRNA 2-thiolation protein 2 (464 aa).

Belongs to the CTU2/NCS2 family.

The protein localises to the cytoplasm. It functions in the pathway tRNA modification; 5-methoxycarbonylmethyl-2-thiouridine-tRNA biosynthesis. In terms of biological role, plays a central role in 2-thiolation of mcm(5)S(2)U at tRNA wobble positions of tRNA(Lys), tRNA(Glu) and tRNA(Gln). May act by forming a heterodimer with NCS6/CTU1 that ligates sulfur from thiocarboxylated URM1 onto the uridine of tRNAs at wobble position. This is Cytoplasmic tRNA 2-thiolation protein 2 from Oryza sativa subsp. indica (Rice).